The sequence spans 92 residues: Small ribosomal subunit protein uS19 (92 aa).

It belongs to the universal ribosomal protein uS19 family.

Functionally, protein S19 forms a complex with S13 that binds strongly to the 16S ribosomal RNA. This is Small ribosomal subunit protein uS19 from Methylobacterium radiotolerans (strain ATCC 27329 / DSM 1819 / JCM 2831 / NBRC 15690 / NCIMB 10815 / 0-1).